A 79-amino-acid polypeptide reads, in one-letter code: Dolichyl-diphosphooligosaccharide--protein glycosyltransferase subunit TMEM258 (79 aa).

Met1 is subject to N-acetylmethionine. The next 2 membrane-spanning stretches (helical) occupy residues 17-37 and 59-79; these read VFPHLTVVLLAIGMFFTAWFF and VASLFMGFGVLFLLLWVGIYI.

It belongs to the OST5 family. As to quaternary structure, component of the oligosaccharyltransferase (OST) complex. OST exists in two different complex forms which contain common core subunits RPN1, RPN2, OST48, OST4, DAD1 and TMEM258, either STT3A or STT3B as catalytic subunits, and form-specific accessory subunits. STT3A complex assembly occurs through the formation of 3 subcomplexes. Subcomplex 1 contains RPN1 and TMEM258, subcomplex 2 contains the STT3A-specific subunits STT3A, DC2/OSTC, and KCP2 as well as the core subunit OST4, and subcomplex 3 contains RPN2, DAD1, and OST48. The STT3A complex can form stable complexes with the Sec61 complex or with both the Sec61 and TRAP complexes.

The protein localises to the membrane. Its subcellular location is the endoplasmic reticulum. It localises to the cytoplasm. The protein operates within protein modification; protein glycosylation. In terms of biological role, subunit of the oligosaccharyl transferase (OST) complex that catalyzes the initial transfer of a defined glycan (Glc(3)Man(9)GlcNAc(2) in eukaryotes) from the lipid carrier dolichol-pyrophosphate to an asparagine residue within an Asn-X-Ser/Thr consensus motif in nascent polypeptide chains, the first step in protein N-glycosylation. N-glycosylation occurs cotranslationally and the complex associates with the Sec61 complex at the channel-forming translocon complex that mediates protein translocation across the endoplasmic reticulum (ER). All subunits are required for a maximal enzyme activity. Involved in ER homeostasis in the colonic epithelium. This is Dolichyl-diphosphooligosaccharide--protein glycosyltransferase subunit TMEM258 from Bos taurus (Bovine).